We begin with the raw amino-acid sequence, 374 residues long: Trehalose-phosphate phosphatase B (374 aa).

The protein belongs to the trehalose phosphatase family. Requires a divalent metal cation as cofactor. In terms of tissue distribution, expressed in flowers.

It catalyses the reaction alpha,alpha-trehalose 6-phosphate + H2O = alpha,alpha-trehalose + phosphate. Its pathway is glycan biosynthesis; trehalose biosynthesis. Its function is as follows. Removes the phosphate from trehalose 6-phosphate to produce free trehalose. Trehalose accumulation in plant may improve abiotic stress tolerance. This chain is Trehalose-phosphate phosphatase B (TPPB), found in Arabidopsis thaliana (Mouse-ear cress).